The sequence spans 32 residues: Delta-conotoxin-like MVID (32 aa).

3 disulfide bridges follow: Cys-3–Cys-18, Cys-10–Cys-22, and Cys-17–Cys-27. Pro-14 carries the post-translational modification 4-hydroxyproline.

It belongs to the conotoxin O1 superfamily. In terms of tissue distribution, expressed by the venom duct.

Its subcellular location is the secreted. Delta-conotoxins bind to site 6 of voltage-gated sodium channels (Nav) and inhibit the inactivation process. The chain is Delta-conotoxin-like MVID from Conus magus (Magical cone).